Here is a 71-residue protein sequence, read N- to C-terminus: MRRSFYSWLMTQRNPKSNEPVAILADYAFDESDFPKQSDNFDEVSRFLEESASFAFSMSDFDAIWEDYLGH.

It belongs to the UPF0346 family.

In Streptococcus suis (strain 05ZYH33), this protein is UPF0346 protein SSU05_1322.